Here is a 295-residue protein sequence, read N- to C-terminus: Structure-specific endonuclease subunit SLX1 (295 aa).

The 83-residue stretch at 11-93 (EFYGVYILQS…QHPKTSRHMA (83 aa)) folds into the GIY-YIG domain. The interval 85-133 (HPKTSRHMAGGGGSVTATAETAKSAPVAGKSDATSPAKNRRNAAPVARS) is disordered. The SLX1-type zinc finger occupies 205–272 (CCLCSDAIDY…IPSDVSCSQC (68 aa)).

It belongs to the SLX1 family. Forms a heterodimer with SLX4. A divalent metal cation is required as a cofactor.

It is found in the nucleus. In terms of biological role, catalytic subunit of the SLX1-SLX4 structure-specific endonuclease that resolves DNA secondary structures generated during DNA repair and recombination. Has endonuclease activity towards branched DNA substrates, introducing single-strand cuts in duplex DNA close to junctions with ss-DNA. This is Structure-specific endonuclease subunit SLX1 from Meyerozyma guilliermondii (strain ATCC 6260 / CBS 566 / DSM 6381 / JCM 1539 / NBRC 10279 / NRRL Y-324) (Yeast).